A 486-amino-acid polypeptide reads, in one-letter code: UDP-N-acetylmuramate--L-alanine ligase (486 aa).

123–129 (GTHGKTT) serves as a coordination point for ATP.

It belongs to the MurCDEF family.

Its subcellular location is the cytoplasm. The catalysed reaction is UDP-N-acetyl-alpha-D-muramate + L-alanine + ATP = UDP-N-acetyl-alpha-D-muramoyl-L-alanine + ADP + phosphate + H(+). Its pathway is cell wall biogenesis; peptidoglycan biosynthesis. Functionally, cell wall formation. This Pseudomonas syringae pv. syringae (strain B728a) protein is UDP-N-acetylmuramate--L-alanine ligase.